A 257-amino-acid polypeptide reads, in one-letter code: MDRRSRAQQWRRARHNYNDLCPPIGRRAATALLWLSCSIALLRALASSNARAQQRAAQRRSFLNAHHRSAAAAAAAQVLPESSESESDHEHEEVEPELARPECLEYDQDDYETETDSETEPESDIESETEIETEPETEPETAPTTEPETEPEDERGPRGATFNQSLTQRLHALKLQSADASPRRAQPTTQEPESASEGEEPQRGPLDQDPRDPEEEPEERKEENRQPRRCKTRRPARRRDQSPESPPRKGPIPIRRH.

The first 46 residues, 1 to 46 (MDRRSRAQQWRRARHNYNDLCPPIGRRAATALLWLSCSIALLRALA), serve as a signal peptide directing secretion. Positions 61–257 (SFLNAHHRSA…RKGPIPIRRH (197 aa)) are disordered. Residues 70 to 82 (AAAAAAAQVLPES) are compositionally biased toward low complexity. Residues 86–103 (ESDHEHEEVEPELARPEC) show a composition bias toward basic and acidic residues. The segment covering 104–139 (LEYDQDDYETETDSETEPESDIESETEIETEPETEP) has biased composition (acidic residues). A compositionally biased stretch (basic and acidic residues) spans 200–211 (EPQRGPLDQDPR). Over residues 227 to 237 (PRRCKTRRPAR) the composition is skewed to basic residues.

The protein belongs to the NESP55 family. Binds keratan sulfate chains. Post-translationally, may be proteolytically processed to give rise to a number of active peptides.

The protein resides in the cytoplasmic vesicle. Its subcellular location is the secretory vesicle. The protein localises to the secreted. This is Neuroendocrine secretory protein 55 from Mus musculus (Mouse).